A 693-amino-acid chain; its full sequence is Phosphoribosylformylglycinamidine synthase subunit PurL (693 aa).

Residue His34 is part of the active site. 2 residues coordinate ATP: Tyr37 and Lys76. Residue Glu78 coordinates Mg(2+). Residues 79 to 82 (SHNH) and Arg101 each bind substrate. The active-site Proton acceptor is His80. Residue Asp102 coordinates Mg(2+). Gln222 is a substrate binding site. Residue Asp248 coordinates Mg(2+). 292–294 (ETQ) contacts substrate. ATP-binding residues include Asp470 and Gly507. Residue Ser510 coordinates substrate.

Belongs to the FGAMS family. Monomer. Part of the FGAM synthase complex composed of 1 PurL, 1 PurQ and 2 PurS subunits.

It localises to the cytoplasm. The enzyme catalyses N(2)-formyl-N(1)-(5-phospho-beta-D-ribosyl)glycinamide + L-glutamine + ATP + H2O = 2-formamido-N(1)-(5-O-phospho-beta-D-ribosyl)acetamidine + L-glutamate + ADP + phosphate + H(+). It participates in purine metabolism; IMP biosynthesis via de novo pathway; 5-amino-1-(5-phospho-D-ribosyl)imidazole from N(2)-formyl-N(1)-(5-phospho-D-ribosyl)glycinamide: step 1/2. Part of the phosphoribosylformylglycinamidine synthase complex involved in the purines biosynthetic pathway. Catalyzes the ATP-dependent conversion of formylglycinamide ribonucleotide (FGAR) and glutamine to yield formylglycinamidine ribonucleotide (FGAM) and glutamate. The FGAM synthase complex is composed of three subunits. PurQ produces an ammonia molecule by converting glutamine to glutamate. PurL transfers the ammonia molecule to FGAR to form FGAM in an ATP-dependent manner. PurS interacts with PurQ and PurL and is thought to assist in the transfer of the ammonia molecule from PurQ to PurL. This is Phosphoribosylformylglycinamidine synthase subunit PurL from Pyrobaculum neutrophilum (strain DSM 2338 / JCM 9278 / NBRC 100436 / V24Sta) (Thermoproteus neutrophilus).